An 835-amino-acid polypeptide reads, in one-letter code: Probable RNA-directed RNA polymerase (835 aa).

Belongs to the totiviridae RNA-directed RNA polymerase family.

The enzyme catalyses RNA(n) + a ribonucleoside 5'-triphosphate = RNA(n+1) + diphosphate. Functionally, RNA-dependent RNA polymerase which replicates the viral genome. Catalyzes the transcription of fully conservative plus-strand genomic RNAs that are extruded from the virion into the cytoplasm where they function as mRNAs for translation of viral proteins and also as substrates for encapsidation to form new virions. Once encapsidated, the positive strand is converted to dsRNA by the RNA-directed RNA polymerase. This Helminthosporium victoriae virus-190S (Hv190SV) protein is Probable RNA-directed RNA polymerase.